Here is a 373-residue protein sequence, read N- to C-terminus: tRNA 2-selenouridine synthase (373 aa).

Residues 12–136 (FINDRPMMDA…MRGFLLETTE (125 aa)) enclose the Rhodanese domain. Cys95 functions as the S-selanylcysteine intermediate in the catalytic mechanism.

The protein belongs to the SelU family. As to quaternary structure, monomer.

It carries out the reaction 5-methylaminomethyl-2-thiouridine(34) in tRNA + selenophosphate + (2E)-geranyl diphosphate + H2O + H(+) = 5-methylaminomethyl-2-selenouridine(34) in tRNA + (2E)-thiogeraniol + phosphate + diphosphate. The enzyme catalyses 5-methylaminomethyl-2-thiouridine(34) in tRNA + (2E)-geranyl diphosphate = 5-methylaminomethyl-S-(2E)-geranyl-thiouridine(34) in tRNA + diphosphate. The catalysed reaction is 5-methylaminomethyl-S-(2E)-geranyl-thiouridine(34) in tRNA + selenophosphate + H(+) = 5-methylaminomethyl-2-(Se-phospho)selenouridine(34) in tRNA + (2E)-thiogeraniol. It catalyses the reaction 5-methylaminomethyl-2-(Se-phospho)selenouridine(34) in tRNA + H2O = 5-methylaminomethyl-2-selenouridine(34) in tRNA + phosphate. Functionally, involved in the post-transcriptional modification of the uridine at the wobble position (U34) of tRNA(Lys), tRNA(Glu) and tRNA(Gln). Catalyzes the conversion of 2-thiouridine (S2U-RNA) to 2-selenouridine (Se2U-RNA). Acts in a two-step process involving geranylation of 2-thiouridine (S2U) to S-geranyl-2-thiouridine (geS2U) and subsequent selenation of the latter derivative to 2-selenouridine (Se2U) in the tRNA chain. The sequence is that of tRNA 2-selenouridine synthase from Ectopseudomonas mendocina (strain ymp) (Pseudomonas mendocina).